We begin with the raw amino-acid sequence, 77 residues long: U11-lycotoxin-Ls1a (77 aa).

Positions 1 to 20 are cleaved as a signal peptide; that stretch reads MKLIILTGLVLFAIVSLIEA. A propeptide spanning residues 21–26 is cleaved from the precursor; it reads EEESGR.

Belongs to the neurotoxin 19 (CSTX) family. 10 (U11-Lctx) subfamily. Post-translationally, contains 4 disulfide bonds. As to expression, expressed by the venom gland.

The protein resides in the secreted. This is U11-lycotoxin-Ls1a from Lycosa singoriensis (Wolf spider).